Reading from the N-terminus, the 400-residue chain is Centrosomal protein CEP57L1 (400 aa).

The residue at position 45 (serine 45) is a Phosphoserine. Coiled coils occupy residues 47–111 (NNQA…KKDI) and 138–213 (NVER…QDRA). Disordered regions lie at residues 222–261 (REPP…EPVS) and 314–400 (MESK…KWEQ). The span at 244-258 (RTTSQARANPQSSGE) shows a compositional bias: polar residues. Residues 261–345 (SICDSLSELL…EKIENSRINE (85 aa)) adopt a coiled-coil conformation. Composition is skewed to basic and acidic residues over residues 314–342 (MESK…ENSR) and 391–400 (LRRDDIKWEQ).

This sequence belongs to the translokin family.

The protein resides in the cytoplasm. The protein localises to the cytoskeleton. Its subcellular location is the microtubule organizing center. It is found in the centrosome. Functionally, centrosomal protein which may be required for microtubule attachment to centrosomes. This is Centrosomal protein CEP57L1 (Cep57l1) from Mus musculus (Mouse).